The chain runs to 506 residues: Maturase K (506 aa).

It belongs to the intron maturase 2 family. MatK subfamily.

It localises to the plastid. It is found in the chloroplast. In terms of biological role, usually encoded in the trnK tRNA gene intron. Probably assists in splicing its own and other chloroplast group II introns. The sequence is that of Maturase K from Cytisus scoparius (Scotch broom).